The following is a 229-amino-acid chain: Ribonuclease 3 (229 aa).

The RNase III domain occupies Leu-5–Gly-127. Glu-40 is a binding site for Mg(2+). Asp-44 is a catalytic residue. Mg(2+) contacts are provided by Asp-113 and Glu-116. Glu-116 is a catalytic residue. The DRBM domain occupies Asp-154–Val-224.

This sequence belongs to the ribonuclease III family. Homodimer. The cofactor is Mg(2+).

The protein localises to the cytoplasm. It catalyses the reaction Endonucleolytic cleavage to 5'-phosphomonoester.. Digests double-stranded RNA. Involved in the processing of primary rRNA transcript to yield the immediate precursors to the large and small rRNAs (23S and 16S). Processes some mRNAs, and tRNAs when they are encoded in the rRNA operon. Processes pre-crRNA and tracrRNA of type II CRISPR loci if present in the organism. This is Ribonuclease 3 from Ectopseudomonas mendocina (strain ymp) (Pseudomonas mendocina).